Here is a 203-residue protein sequence, read N- to C-terminus: HTH-type transcriptional regulator BetI (203 aa).

Residues 8 to 68 (PVRRKALVDA…ATIRSLLGKL (61 aa)) enclose the HTH tetR-type domain. Residues 31 to 50 (TMSEIARTAGVSPALAHHYF) constitute a DNA-binding region (H-T-H motif).

The protein operates within amine and polyamine biosynthesis; betaine biosynthesis via choline pathway [regulation]. Repressor involved in the biosynthesis of the osmoprotectant glycine betaine. It represses transcription of the choline transporter BetT and the genes of BetAB involved in the synthesis of glycine betaine. This is HTH-type transcriptional regulator BetI from Rhizobium meliloti (strain 1021) (Ensifer meliloti).